A 917-amino-acid chain; its full sequence is Protein Ami (917 aa).

The signal sequence occupies residues 1–30 (MKKLVKSAVVFAGLVFIGTSATMITEKASA). In terms of domain architecture, N-acetylmuramoyl-L-alanine amidase spans 118 to 245 (KPEGIVIHET…YLGGTTHTDP (128 aa)). A GW repeat region, necessary and sufficient for cell surface attachment region spans residues 262-917 (LINEKYKAMQ…KAANLSAKKQ (656 aa)). GW domains follow at residues 279-358 (YDKA…TFYT), 361-435 (MEKT…TTKY), 440-519 (YDKA…TFYT), 522-596 (MEKN…ATQY), 601-679 (YDKA…TFYT), 682-756 (MEKT…TTKY), 761-840 (YDKA…TFYT), and 843-917 (MEKN…AKKQ).

The protein in the N-terminal section; belongs to the N-acetylmuramoyl-L-alanine amidase 2 family.

It is found in the cell surface. It localises to the cell membrane. A bacteriolysin able to lyse both L.monocytogenes and S.aureus. This is Protein Ami from Listeria monocytogenes serotype 1/2a (strain EGD / Mackaness).